The following is a 129-amino-acid chain: Large ribosomal subunit protein bL17 (129 aa).

This sequence belongs to the bacterial ribosomal protein bL17 family. As to quaternary structure, part of the 50S ribosomal subunit. Contacts protein L32.

The chain is Large ribosomal subunit protein bL17 from Polynucleobacter asymbioticus (strain DSM 18221 / CIP 109841 / QLW-P1DMWA-1) (Polynucleobacter necessarius subsp. asymbioticus).